The chain runs to 323 residues: Protease Do-like 5, chloroplastic (323 aa).

The N-terminal 28 residues, 1–28 (MTMALASSKAFSSIFNTLSPINQSKFVL), are a transit peptide targeting the chloroplast. The N-terminal 45 residues, 29-73 (ACSGSNHVDVIDRRRRIMIFGSSLALTSSLLGSNQQRLPMESAIA), are a transit peptide targeting the thylakoid. Residues histidine 147, aspartate 188, and serine 266 each act as charge relay system in the active site. Positions 186–283 (DNDLAVLKIE…YGHTIGVNTA (98 aa)) are serine protease.

The protein belongs to the peptidase S1C family.

The protein resides in the plastid. The protein localises to the chloroplast thylakoid lumen. Probable serine protease. This chain is Protease Do-like 5, chloroplastic (DEGP5), found in Arabidopsis thaliana (Mouse-ear cress).